Here is a 1108-residue protein sequence, read N- to C-terminus: MFLGPWPFSRLLSWFAISSRLSGQHGLPSSKFLRCLCLLALLPLLRWGQALPYKIGVIGPWTCDPFFSKALPEVAAALAIERISRDKTFDRSYSFEYVILNEDCQTSKALASFISHQQMASGFVGPANPGFCEAASLLGTSWDKGIFSWACVNHELDNKHSFPTFSRTLPSPIRVLVTVMKYFQWAHAGVISSDEDIWMHTANRVSSALRSQGLPVGVVLTSGRDSQSIQKALQQIRQADRIRIIIMCMHSALIGGETQTHFLELAHDLKMTDGTYVFVPYDVLLYSLPYKHSPYQVLRNNPKLREAYDAVLTITVESHEKTFYEAYAEAAARGEIPEKPDSNQVSPLFGTIYNSIYFIAQAMNNAMKKNGRASAASLVQHSRNMQFYGFNQLIKTDSNGNGISEYVILDTNGKEWELRGTYTVDMETELLRFRGTPIHFPGGRPTSADAKCWFAERKICQGGIDPALAMMVCFALLIALLSINGFAYFIRRRINKIQLIKGPNRILLTLEDVTFINPHFGSKRGSRASVSFQIISEVQSGRSPRLSFSSGSLTPATYENSNIAIYEGDWVWLKKFPPGDFGDIKSIKSSASDVFEMMKDLRHENVNPLLGFFYDSGMFAIVSEFCSRRSLEDILTNDDVKLDWMFKSSLLLDLIKGMKYLHHREFIHGRLKSRNCVVDGRFVLKVTDYGFNDILEMLRLSEEEPSEEELLWTAPELLRAPGGIRLGSFAGDVYSFAIIMQEVMVRGAPFCMMDLPAKEIIDRLKMPPPVYRPVVSPEYAPAECLQLMKQCWAEASEQRPTFDEIFNQFKTFNKGKKTNIIDSMLRMLEQYSSNLEDLIRERTEELEIEKQKTEKLLTQMLPLSVAESLKKGCTVEPEGFDLVTLYFSDIVGFTTISAMSEPIEVVDLLNDLYTLFDAIIGSHDVYKVETIGDAYMVASGLPKRNGSRHAAEIANMSLDILSSVGTFKMRHMPEVPVRIRIGLHSGPVVAGVVGLTMPRYCLFGDTVNTASRMESTGLPYRIHVSLSTVTILQTLSEGYEVELRGRTELKGKGTEETFWLVGKKGFTKPLPVPPPVGKDGQVGHGLQPAEIAAFQRRKAERQLVRNKP.

The first 50 residues, Met1–Ala50, serve as a signal peptide directing secretion. Residues Leu51–Ala469 lie on the Extracellular side of the membrane. The cysteines at positions 104 and 132 are disulfide-linked. Residues Met470–Ile490 form a helical membrane-spanning segment. Residues Arg491 to Pro1108 lie on the Cytoplasmic side of the membrane. Residues Phe532–Phe812 enclose the Protein kinase domain. One can recognise a Guanylate cyclase domain in the interval Thr884–Glu1014.

Belongs to the adenylyl cyclase class-4/guanylyl cyclase family. As to quaternary structure, homodimer. Interacts with RD3; promotes the exit of GUCY2F from the endoplasmic reticulum and its trafficking to the photoreceptor outer segments. Post-translationally, there are 9 conserved cysteine residues in sensory guanylate cyclases, 6 in the extracellular domain, which may be involved in intra- or interchain disulfide bonds. As to expression, retina.

The protein localises to the membrane. It localises to the photoreceptor outer segment membrane. The enzyme catalyses GTP = 3',5'-cyclic GMP + diphosphate. Activated by GUCA1B when free calcium ions concentration is low, and inhibited by GUCA1B when free calcium ions concentration is high. Inhibited by RD3. Its function is as follows. Responsible for the synthesis of cyclic GMP (cGMP) in rods and cones of photoreceptors. Plays an essential role in phototransduction, by mediating cGMP replenishment. May also participate in the trafficking of membrane-asociated proteins to the photoreceptor outer segment membrane. In Mus musculus (Mouse), this protein is Retinal guanylyl cyclase 2.